The chain runs to 436 residues: Xylose isomerase (436 aa).

Active-site residues include His100 and Asp103. Glu231, Glu267, His270, Asp295, Asp306, Asp308, and Asp338 together coordinate Mg(2+).

This sequence belongs to the xylose isomerase family. Homotetramer. It depends on Mg(2+) as a cofactor.

Its subcellular location is the cytoplasm. The catalysed reaction is alpha-D-xylose = alpha-D-xylulofuranose. The sequence is that of Xylose isomerase from Agrobacterium fabrum (strain C58 / ATCC 33970) (Agrobacterium tumefaciens (strain C58)).